We begin with the raw amino-acid sequence, 257 residues long: Snake venom serine protease KN2 (257 aa).

An N-terminal signal peptide occupies residues 1-18 (MVLIRVLANLLILQLSYA). Positions 19-24 (QKSSEL) are excised as a propeptide. The 224-residue stretch at 25–248 (VIGGHPCNIN…HLDWIKSIIA (224 aa)) folds into the Peptidase S1 domain. 6 disulfide bridges follow: Cys-31/Cys-162, Cys-49/Cys-65, Cys-97/Cys-255, Cys-141/Cys-209, Cys-173/Cys-188, and Cys-199/Cys-224. Catalysis depends on charge relay system residues His-64 and Asp-109. N-linked (GlcNAc...) asparagine glycosylation is found at Asn-120 and Asn-121. Ser-203 acts as the Charge relay system in catalysis.

This sequence belongs to the peptidase S1 family. Snake venom subfamily. As to quaternary structure, monomer. Expressed by the venom gland.

It is found in the secreted. Snake venom serine protease that may act in the hemostasis system of the prey. This is Snake venom serine protease KN2 from Trimeresurus stejnegeri (Chinese green tree viper).